The chain runs to 181 residues: MILKEKYLKEVKSNLQKQFNYSSSMEIPRIEKVILNMTAGKEVTNAKAIEEVINELTLISGQKPYQTVAKKSLASWKLREGMPMGGKVTLRSKNMWIFLNKLINIAMPRIRDFRGVSPKAFDGRGNYSLGIKEQIIFPEIEFDKIRKIKGLDVIIVTSAKTNKEARALLEGIGIPFAKVEK.

The protein belongs to the universal ribosomal protein uL5 family. In terms of assembly, part of the 50S ribosomal subunit; part of the 5S rRNA/L5/L18/L25 subcomplex. Contacts the 5S rRNA and the P site tRNA. Forms a bridge to the 30S subunit in the 70S ribosome.

In terms of biological role, this is one of the proteins that bind and probably mediate the attachment of the 5S RNA into the large ribosomal subunit, where it forms part of the central protuberance. In the 70S ribosome it contacts protein S13 of the 30S subunit (bridge B1b), connecting the 2 subunits; this bridge is implicated in subunit movement. Contacts the P site tRNA; the 5S rRNA and some of its associated proteins might help stabilize positioning of ribosome-bound tRNAs. The chain is Large ribosomal subunit protein uL5 from Mycoplasmopsis pulmonis (strain UAB CTIP) (Mycoplasma pulmonis).